The sequence spans 239 residues: Ribonuclease HII (239 aa).

The RNase H type-2 domain occupies Gly-30 to Gly-221. Positions 36, 37, and 130 each coordinate a divalent metal cation.

It belongs to the RNase HII family. Mn(2+) is required as a cofactor. Mg(2+) serves as cofactor.

The protein resides in the cytoplasm. The enzyme catalyses Endonucleolytic cleavage to 5'-phosphomonoester.. In terms of biological role, endonuclease that specifically degrades the RNA of RNA-DNA hybrids. The chain is Ribonuclease HII from Mycolicibacterium paratuberculosis (strain ATCC BAA-968 / K-10) (Mycobacterium paratuberculosis).